A 431-amino-acid chain; its full sequence is 4-hydroxy-3-methylbut-2-en-1-yl diphosphate synthase (flavodoxin) (431 aa).

Positions 1–21 are disordered; sequence MNKLENPSQRDVAGPSPRHKT. [4Fe-4S] cluster-binding residues include C310, C313, C356, and E363.

Belongs to the IspG family. The cofactor is [4Fe-4S] cluster.

It carries out the reaction (2E)-4-hydroxy-3-methylbut-2-enyl diphosphate + oxidized [flavodoxin] + H2O + 2 H(+) = 2-C-methyl-D-erythritol 2,4-cyclic diphosphate + reduced [flavodoxin]. The protein operates within isoprenoid biosynthesis; isopentenyl diphosphate biosynthesis via DXP pathway; isopentenyl diphosphate from 1-deoxy-D-xylulose 5-phosphate: step 5/6. Its function is as follows. Converts 2C-methyl-D-erythritol 2,4-cyclodiphosphate (ME-2,4cPP) into 1-hydroxy-2-methyl-2-(E)-butenyl 4-diphosphate. This Nitrobacter hamburgensis (strain DSM 10229 / NCIMB 13809 / X14) protein is 4-hydroxy-3-methylbut-2-en-1-yl diphosphate synthase (flavodoxin).